We begin with the raw amino-acid sequence, 121 residues long: Non-specific lipid-transfer protein 9 (121 aa).

Positions 1–27 are cleaved as a signal peptide; the sequence is MRKSISIAFVIAITIFMSHLNVFTVYS. Intrachain disulfides connect cysteine 31-cysteine 80, cysteine 41-cysteine 57, cysteine 58-cysteine 102, and cysteine 78-cysteine 116.

Belongs to the plant LTP family.

Functionally, plant non-specific lipid-transfer proteins transfer phospholipids as well as galactolipids across membranes. May play a role in wax or cutin deposition in the cell walls of expanding epidermal cells and certain secretory tissues. This chain is Non-specific lipid-transfer protein 9 (LTP9), found in Arabidopsis thaliana (Mouse-ear cress).